The sequence spans 700 residues: Putative glutamine-dependent NAD(+) synthetase (700 aa).

Residues 5-275 enclose the CN hydrolase domain; the sequence is VTIASCQLNQ…VEVISATVDV (271 aa). E45 acts as the Proton acceptor; for glutaminase activity in catalysis. The active-site For glutaminase activity is the K114. The active-site Nucleophile; for glutaminase activity is the C175. The tract at residues 327-700 is ligase; that stretch reads IPLPEEEITF…ASKFEQHQRK (374 aa). 357–364 provides a ligand contact to ATP; the sequence is PLSGGLDS. The active site involves S359.

The protein in the C-terminal section; belongs to the NAD synthetase family.

It catalyses the reaction deamido-NAD(+) + L-glutamine + ATP + H2O = L-glutamate + AMP + diphosphate + NAD(+) + H(+). The protein operates within cofactor biosynthesis; NAD(+) biosynthesis; NAD(+) from deamido-NAD(+) (L-Gln route): step 1/1. The chain is Putative glutamine-dependent NAD(+) synthetase from Schizosaccharomyces pombe (strain 972 / ATCC 24843) (Fission yeast).